Reading from the N-terminus, the 298-residue chain is Riboflavin transporter (298 aa).

The next 9 helical transmembrane spans lie at 8–28 (LQGALWMLTAGLAFAIVNSVA), 35–55 (FGLPSTTVALVQYAIAIVVIL), 79–99 (VFLAVIGIQLWLWALAYPVPI), 101–121 (QGIALLMTSPLFATIGSGLWL), 125–145 (VGMARWVATLTGFIGAMIILE), 151–171 (FNLASLLPVGAAFFWASYSLM), 184–204 (MVVYLLLLITPFNLLLALPDW), 211–231 (TVWLLLIGAGVMTALAQWAIA), and 258–278 (WLVFGWVPPGRLWLGAAIIVL). EamA domains follow at residues 10-144 (GALW…MIIL) and 156-284 (LLPV…AFIT).

This sequence belongs to the drug/metabolite transporter (DMT) superfamily. 10 TMS drug/metabolite exporter (DME) (TC 2.A.7.3) family.

The protein resides in the cell membrane. In terms of biological role, transports riboflavin into the cell. This chain is Riboflavin transporter, found in Vibrio cholerae serotype O1 (strain ATCC 39315 / El Tor Inaba N16961).